The sequence spans 520 residues: Bifunctional purine biosynthesis protein PurH (520 aa).

Positions 1–150 (MSDDRKAIKR…KNHPSVAVVV (150 aa)) constitute an MGS-like domain.

Belongs to the PurH family.

The catalysed reaction is (6R)-10-formyltetrahydrofolate + 5-amino-1-(5-phospho-beta-D-ribosyl)imidazole-4-carboxamide = 5-formamido-1-(5-phospho-D-ribosyl)imidazole-4-carboxamide + (6S)-5,6,7,8-tetrahydrofolate. It catalyses the reaction IMP + H2O = 5-formamido-1-(5-phospho-D-ribosyl)imidazole-4-carboxamide. Its pathway is purine metabolism; IMP biosynthesis via de novo pathway; 5-formamido-1-(5-phospho-D-ribosyl)imidazole-4-carboxamide from 5-amino-1-(5-phospho-D-ribosyl)imidazole-4-carboxamide (10-formyl THF route): step 1/1. The protein operates within purine metabolism; IMP biosynthesis via de novo pathway; IMP from 5-formamido-1-(5-phospho-D-ribosyl)imidazole-4-carboxamide: step 1/1. This is Bifunctional purine biosynthesis protein PurH from Corynebacterium glutamicum (strain ATCC 13032 / DSM 20300 / JCM 1318 / BCRC 11384 / CCUG 27702 / LMG 3730 / NBRC 12168 / NCIMB 10025 / NRRL B-2784 / 534).